A 482-amino-acid polypeptide reads, in one-letter code: Sensor histidine kinase CusS (482 aa).

The Cytoplasmic portion of the chain corresponds to 1-15 (MVSKPFQRPFSLATR). A helical transmembrane segment spans residues 16-36 (LTFFISLATIAAFFAFAWIMI). At 37 to 186 (HSVKVHFAEQ…LHYINDLMNK (150 aa)) the chain is on the periplasmic side. A helical transmembrane segment spans residues 187–207 (LIMTASVISILIVFIVLLAVH). An HAMP domain is found at 207–260 (HKGHAPIRSVSRQIQNITSKDLDVRLDPQTVPIELEQLVLSFNHMIERIEDVFT). The Cytoplasmic portion of the chain corresponds to 208–482 (KGHAPIRSVS…RFVIVLPERG (275 aa)). Residues 268–482 (DIAHEIRTPI…RFVIVLPERG (215 aa)) form the Histidine kinase domain. Histidine 271 carries the phosphohistidine; by autocatalysis modification.

In terms of processing, autophosphorylated.

It is found in the cell inner membrane. The enzyme catalyses ATP + protein L-histidine = ADP + protein N-phospho-L-histidine.. In terms of biological role, member of the two-component regulatory system CusS/CusR involved in response to copper and silver. Acts as a copper/silver ion sensor. Activates CusR by phosphorylation. This is Sensor histidine kinase CusS (cusS) from Escherichia coli O157:H7.